The chain runs to 157 residues: Arginine regulator (157 aa).

Belongs to the ArgR family.

It localises to the cytoplasm. The protein operates within amino-acid degradation; L-arginine degradation via ADI pathway. In terms of biological role, regulates the transcription of the arc operon, involved in arginine catabolism. This is Arginine regulator (argR1) from Streptococcus pyogenes serotype M3 (strain SSI-1).